Here is a 1092-residue protein sequence, read N- to C-terminus: Probable cellulose synthase A catalytic subunit 6 [UDP-forming] (1092 aa).

Residues 1-280 (MEASAGLVAG…SSSRINPYRM (280 aa)) are Cytoplasmic-facing. Zn(2+)-binding residues include cysteine 42, cysteine 45, cysteine 61, cysteine 64, cysteine 69, cysteine 72, cysteine 84, and cysteine 87. The RING-type; degenerate zinc-finger motif lies at 42–88 (CQICGDDVGEGPDGEPFVACNECAFPVCRNCYDYERREGSQACPQCK). Residues 100 to 123 (VAGDEEEDGVDDLEGEFGLDGRED) form a disordered region. The segment covering 103 to 116 (DEEEDGVDDLEGEF) has biased composition (acidic residues). The chain crosses the membrane as a helical span at residues 281–301 (IIIIRLVVLGFFFHYRVMHPV). Topologically, residues 302–303 (ND) are extracellular. Residues 304–324 (AFALWLISVICEIWFAMSWIL) traverse the membrane as a helical segment. Residues 325–868 (DQFPKWLPIE…FLERFSYINS (544 aa)) are Cytoplasmic-facing. Positions 363, 369, 370, and 399 each coordinate UDP-alpha-D-glucose. Aspartate 399 is an active-site residue. Positions 453–480 (VRERRAMKRDYEEFKVRINALVAKAQKV) form a coiled coil. Lysine 540 is a UDP-alpha-D-glucose binding site. Mn(2+) contacts are provided by lysine 541 and aspartate 565. Aspartate 792 is a catalytic residue. The chain crosses the membrane as a helical span at residues 869–889 (IVYPWTSIPLLAYCTLPAICL). Residues 890–901 (LTGKFITPELTN) lie on the Extracellular side of the membrane. A helical membrane pass occupies residues 902 to 922 (VASLWFMSLFICIFVTGILEM). The Cytoplasmic segment spans residues 923-937 (RWSGVAIDDWWRNEQ). The helical transmembrane segment at 938 to 958 (FWVIGGVSSHLFAVFQGLLKV) threads the bilayer. At 959 to 987 (LAGVDTSFTVTSKAGDDEEFSELYTFKWT) the chain is on the extracellular side. Residues 988–1008 (TLLIPPTTLLLLNFIGVVAGV) traverse the membrane as a helical segment. The Cytoplasmic segment spans residues 1009–1019 (SNAINNGYESW). A helical transmembrane segment spans residues 1020-1040 (GPLFGKLFFAFWVIVHLYPFL). At 1041–1049 (KGLVGRQNR) the chain is on the extracellular side. Residues 1050 to 1070 (TPTIVIVWSILLASIFSLLWV) traverse the membrane as a helical segment. At 1071–1092 (RIDPFLAKNNGPLLEECGLDCN) the chain is on the cytoplasmic side.

It belongs to the glycosyltransferase 2 family. Plant cellulose synthase subfamily. The cofactor is Mn(2+). Requires Zn(2+) as cofactor.

It is found in the cell membrane. It carries out the reaction [(1-&gt;4)-beta-D-glucosyl](n) + UDP-alpha-D-glucose = [(1-&gt;4)-beta-D-glucosyl](n+1) + UDP + H(+). The protein operates within glycan metabolism; plant cellulose biosynthesis. Its function is as follows. Probable catalytic subunit of cellulose synthase terminal complexes ('rosettes'), required for beta-1,4-glucan microfibril crystallization, a major mechanism of the cell wall formation. This chain is Probable cellulose synthase A catalytic subunit 6 [UDP-forming] (CESA6), found in Oryza sativa subsp. japonica (Rice).